We begin with the raw amino-acid sequence, 873 residues long: Sine oculis-binding protein homolog (873 aa).

The segment covering 1–14 (MAEMEKEGRPPENK) has biased composition (basic and acidic residues). Residues 1-26 (MAEMEKEGRPPENKRSRKPAHPVKRE) are disordered. 2 FCS-type zinc fingers span residues 142 to 180 (DDVS…KCFA) and 216 to 256 (FKNN…KCLN). Disordered stretches follow at residues 307–338 (ARRK…SDTA), 413–485 (RGPP…GAPL), 550–608 (KPPS…NQAQ), 742–766 (STEG…ELAV), and 779–811 (SNCH…NPAD). The segment covering 312–338 (PSPASAAGQIQGPGPSASTTASPSDTA) has biased composition (low complexity). The span at 460–485 (IHPPTTPTMPGNPPGLLPPPPPGAPL) shows a compositional bias: pro residues. The segment covering 554–570 (GFSSNGENFIPSNSSET) has biased composition (polar residues). Positions 571–603 (PGGKPPNSSSSPRESKQGSSKPSDSSPSCSGQS) are enriched in low complexity. Basic and acidic residues predominate over residues 783–793 (LEGDTGKKAGE).

This sequence belongs to the SOBP family.

Its function is as follows. Implicated in development of the cochlea. This chain is Sine oculis-binding protein homolog, found in Gallus gallus (Chicken).